A 96-amino-acid polypeptide reads, in one-letter code: Protein RnfH (96 aa).

It belongs to the UPF0125 (RnfH) family.

This is Protein RnfH from Psychromonas ingrahamii (strain DSM 17664 / CCUG 51855 / 37).